We begin with the raw amino-acid sequence, 264 residues long: Zinc import ATP-binding protein ZnuC (264 aa).

The ABC transporter domain maps to 11 to 226; it reads IELKGVNVTF…PVFIRFFGNQ (216 aa). Residue 43–50 participates in ATP binding; it reads GPNGGGKS.

Belongs to the ABC transporter superfamily. Zinc importer (TC 3.A.1.15.5) family. As to quaternary structure, the complex is composed of two ATP-binding proteins (ZnuC), two transmembrane proteins (ZnuB) and a solute-binding protein (ZnuA).

It localises to the cell inner membrane. It carries out the reaction Zn(2+)(out) + ATP(in) + H2O(in) = Zn(2+)(in) + ADP(in) + phosphate(in) + H(+)(in). In terms of biological role, part of the ABC transporter complex ZnuABC involved in zinc import. Responsible for energy coupling to the transport system. This is Zinc import ATP-binding protein ZnuC from Histophilus somni (strain 129Pt) (Haemophilus somnus).